The chain runs to 178 residues: Ribosome maturation factor RimM (178 aa).

A PRC barrel domain is found at 101–178; sequence EGEFYWYQLQ…EMRVDWDADF (78 aa).

It belongs to the RimM family. As to quaternary structure, binds ribosomal protein uS19.

Its subcellular location is the cytoplasm. An accessory protein needed during the final step in the assembly of 30S ribosomal subunit, possibly for assembly of the head region. Essential for efficient processing of 16S rRNA. May be needed both before and after RbfA during the maturation of 16S rRNA. It has affinity for free ribosomal 30S subunits but not for 70S ribosomes. The sequence is that of Ribosome maturation factor RimM from Ectopseudomonas mendocina (strain ymp) (Pseudomonas mendocina).